Reading from the N-terminus, the 360-residue chain is C-C chemokine receptor-like 2 (360 aa).

Topologically, residues 1 to 42 (MDNYTVAPDDEYDVLILDDYLDNSGPDQVPAPEFLSPQQVLQ) are extracellular. The N-linked (GlcNAc...) asparagine glycan is linked to Asn3. The helical transmembrane segment at 43 to 63 (FCCAVFAVGLLDNVLAVFILV) threads the bilayer. At 64–73 (KYKGLKNLGN) the chain is on the cytoplasmic side. The chain crosses the membrane as a helical span at residues 74-94 (IYFLNLALSNLCFLLPLPFWA). The Extracellular segment spans residues 95 to 109 (HTAAHGESPGNGTCK). An N-linked (GlcNAc...) asparagine glycan is attached at Asn105. Cys108 and Cys185 are oxidised to a cystine. Residues 110 to 130 (VLVGLHSSGLYSEVFSNILLL) form a helical membrane-spanning segment. Topologically, residues 131–141 (VQGYRVFSQGR) are cytoplasmic. Residues 142–162 (LASIFTTVSCGIVACILAWAM) form a helical membrane-spanning segment. Residues 163–202 (ATALSLPESVFYEPRMERQKHKCAFGKPHFLPIEAPLWKY) lie on the Extracellular side of the membrane. Residues 203-223 (VLTSKMIILVLAFPLLVFIIC) form a helical membrane-spanning segment. The Cytoplasmic portion of the chain corresponds to 224–243 (CRQLRRRQSFRERQYDLHKP). A helical transmembrane segment spans residues 244–264 (ALVITGVFLLMWAPYNTVLFL). The Extracellular segment spans residues 265-285 (SAFQEHLSLQDEKSSYHLDAS). The chain crosses the membrane as a helical span at residues 286 to 307 (VQVTQLVATTHCCVNPLLYLLL). At 308-360 (DRKAFMRYLRSLFPRCNDIPYQSSGGYQQAPPREGHGRPIELYSNLHQRQDII) the chain is on the cytoplasmic side.

This sequence belongs to the G-protein coupled receptor 1 family. In terms of tissue distribution, expressed in macrophages, astrocytes, in glial cells. Constitutively expressed by mast cells. Detected in bronchial epithelium in OVA-induced airway inflammation. Up-regulated during dendritic cell (DC) maturation.

It is found in the cell membrane. In terms of biological role, receptor for CCL19 and chemerin/RARRES2. Does not appear to be a signaling receptor, but may have a role in modulating chemokine-triggered immune responses by capturing and internalizing CCL19 or by presenting RARRES2 ligand to CMKLR1, a functional signaling receptor. Plays a critical role for the development of Th2 responses. This Mus musculus (Mouse) protein is C-C chemokine receptor-like 2 (Ccrl2).